Here is a 362-residue protein sequence, read N- to C-terminus: S-adenosylmethionine-dependent nucleotide dehydratase RSAD2 (362 aa).

Residues 49–71 form a disordered region; the sequence is QQLQGKTEAGEPPRAQEDSHLPT. The segment covering 56-68 has biased composition (basic and acidic residues); it reads EAGEPPRAQEDSH. Residues 70-290 enclose the Radical SAM core domain; it reads PTTPTSVNYH…LDRHKDVSCL (221 aa). 3 residues coordinate [4Fe-4S] cluster: Cys84, Cys88, and Cys91. An N6-acetyllysine modification is found at Lys198. A Glycyl lysine isopeptide (Lys-Gly) (interchain with G-Cter in ubiquitin) cross-link involves residue Lys207.

Belongs to the radical SAM superfamily. RSAD2 family. As to quaternary structure, homodimer. Interacts with IRAK1 and TRAF6. Interacts with FPPS. Interacts with HADHB. Interacts (via C-terminus) with VAPA/VAP33 (via C-terminus). [4Fe-4S] cluster is required as a cofactor. In terms of processing, acetylated by HAT1. HAT1-mediated acetylation of Lys-198 in turn recruits UBE4A that stimulates RSAD2 polyubiquitination leading to proteasomal degradation. Post-translationally, 'Lys-6'-linked polyubiquitination at Lys-207 leads to RSAD2 protein degradation.

It is found in the endoplasmic reticulum membrane. The protein localises to the golgi apparatus. Its subcellular location is the endoplasmic reticulum. It localises to the lipid droplet. The protein resides in the mitochondrion. It is found in the mitochondrion inner membrane. The protein localises to the mitochondrion outer membrane. The catalysed reaction is CTP + AH2 + S-adenosyl-L-methionine = 3'-deoxy-3',4'-didehydro-CTP + 5'-deoxyadenosine + L-methionine + A + H2O + H(+). IRAK1 and TRAF6 synergistically activate RSAD2 increasing its activity with CTP as substrate about 10-fold. Its function is as follows. Interferon-inducible antiviral protein which plays a major role in the cell antiviral state induced by type I and type II interferon. Catalyzes the conversion of cytidine triphosphate (CTP) to 3'-deoxy-3',4'-didehydro-CTP (ddhCTP) via a SAM-dependent radical mechanism. In turn, ddhCTP acts as a chain terminator for the RNA-dependent RNA polymerases from multiple viruses and directly inhibits viral replication. Therefore, inhibits a wide range of DNA and RNA viruses. Also promotes TLR7 and TLR9-dependent production of IFN-beta production in plasmacytoid dendritic cells (pDCs) by facilitating 'Lys-63'-linked ubiquitination of IRAK1 by TRAF6. Plays a role in CD4+ T-cells activation and differentiation. Facilitates T-cell receptor (TCR)-mediated GATA3 activation and optimal T-helper 2 (Th2) cytokine production by modulating NFKB1 and JUNB activities. Can inhibit secretion of soluble proteins. The chain is S-adenosylmethionine-dependent nucleotide dehydratase RSAD2 from Sus scrofa (Pig).